Consider the following 244-residue polypeptide: MAIVTMKQLLEAGVHFGHQTRRWNPKMAPYIFTDRNGIYIIDLQKTVRKIEEAYNFIKQIVAEGQTVLFVGTKKQAQLTVVEEAGRCGMFYVNQRWLGGMLTNFQTIRRRIDRLKELEKMEAEGRFEVLPKKEVAELMHEKQRLEKYLKGIKDMTKLPGALFVIDPRKERIAVAEARKLGIPIVAIVDTNCDPDEIDYIIPGNDDAIRAVRLLTSRMADAVLEGRQGEQLAPEPDQEAVVEAEA.

The protein belongs to the universal ribosomal protein uS2 family.

The sequence is that of Small ribosomal subunit protein uS2 from Desulforudis audaxviator (strain MP104C).